The chain runs to 275 residues: MKNTIATFQEFKNKGKKISMLTAYDYSMAKIIDESGINGILIGDSLGMVIKGEEDTLSVTVDEIIYHTKSVKKGAKNALIVSDMPFLSYHTSVEEAVKNAGKMIKEGGANAVKLEGGASVIKQIKAIVDAQIPVMGHLGLTPQSVNAFGGFKIQGKSEEAAKRLIEDAKLIEDAGAFAIVLECVPKKVAEIITKEISIPTIGIGAGNECDGQILVYQDMLGMFDDFIPKFVKQYANLGAQMREAIQIYIGEVGEGSFPQDKHSFKIDEKELQKLY.

Mg(2+) is bound by residues Asp-44 and Asp-83. 3-methyl-2-oxobutanoate contacts are provided by residues 44–45 (DS), Asp-83, and Lys-113. Glu-115 contributes to the Mg(2+) binding site. The active-site Proton acceptor is Glu-182.

It belongs to the PanB family. Homodecamer; pentamer of dimers. It depends on Mg(2+) as a cofactor.

The protein localises to the cytoplasm. It catalyses the reaction 3-methyl-2-oxobutanoate + (6R)-5,10-methylene-5,6,7,8-tetrahydrofolate + H2O = 2-dehydropantoate + (6S)-5,6,7,8-tetrahydrofolate. Its pathway is cofactor biosynthesis; (R)-pantothenate biosynthesis; (R)-pantoate from 3-methyl-2-oxobutanoate: step 1/2. Functionally, catalyzes the reversible reaction in which hydroxymethyl group from 5,10-methylenetetrahydrofolate is transferred onto alpha-ketoisovalerate to form ketopantoate. The protein is 3-methyl-2-oxobutanoate hydroxymethyltransferase of Clostridium botulinum (strain Alaska E43 / Type E3).